Reading from the N-terminus, the 107-residue chain is Urease subunit beta (107 aa).

Belongs to the urease beta subunit family. As to quaternary structure, heterotrimer of UreA (gamma), UreB (beta) and UreC (alpha) subunits. Three heterotrimers associate to form the active enzyme.

The protein resides in the cytoplasm. The catalysed reaction is urea + 2 H2O + H(+) = hydrogencarbonate + 2 NH4(+). It participates in nitrogen metabolism; urea degradation; CO(2) and NH(3) from urea (urease route): step 1/1. The sequence is that of Urease subunit beta from Escherichia coli.